The following is a 372-amino-acid chain: Rab9 effector protein with kelch motifs (372 aa).

Kelch repeat units follow at residues 49 to 95, 100 to 146, 151 to 203, 204 to 250, and 254 to 303; these read KVFI…FLPS, SIWV…TSSA, HLYV…AAGT, KLFI…AAVA, and HVYV…VIPW. The segment at 321 to 342 is disordered; that stretch reads LQDEKGDAAEKPETRSGGSREE. A compositionally biased stretch (basic and acidic residues) spans 322–342; sequence QDEKGDAAEKPETRSGGSREE. The stretch at 349–372 is one Kelch 6 repeat; that stretch reads LCFVFGGMNTEGEIYDDCLVTVVD.

In terms of assembly, interacts with PIKFYVE; the interaction recruits RABEPK to the endosomal membrane. Interacts with RAB9 in its GTP-bound conformation. In terms of processing, phosphorylated on Ser residues by PIKFYVE.

The protein resides in the cytoplasm. The protein localises to the endosome membrane. Functionally, rab9 effector required for endosome to trans-Golgi network (TGN) transport. The polypeptide is Rab9 effector protein with kelch motifs (Rabepk) (Rattus norvegicus (Rat)).